A 466-amino-acid chain; its full sequence is Asparagine--tRNA ligase (466 aa).

It belongs to the class-II aminoacyl-tRNA synthetase family. In terms of assembly, homodimer.

The protein localises to the cytoplasm. The enzyme catalyses tRNA(Asn) + L-asparagine + ATP = L-asparaginyl-tRNA(Asn) + AMP + diphosphate + H(+). The sequence is that of Asparagine--tRNA ligase from Klebsiella pneumoniae subsp. pneumoniae (strain ATCC 700721 / MGH 78578).